Here is an 850-residue protein sequence, read N- to C-terminus: Pre-mRNA-splicing factor SYF1 (850 aa).

HAT repeat units lie at residues 10 to 42 (GLLCEDDIPYEQEVAKNPNNLSNWLRYYRFKSS), 46 to 78 (CTFQNRVFILERAVKQLPRSYKLWMIYIDVVLQ), 90 to 122 (SEILSVNMVFERSLQLLNRAPILWIKYLEFLVE), 126 to 160 (YEITLLRRKFNECLYNLPISQHHLIWPLYIRFADD), 208 to 247 (GDVKEASKLFQHILQHTDKFIGLSKSPLQLWIEYIDLLVN), 408 to 442 (AALRTINPLKAHSLANKKENTLPNLWINYANVYAS), 444 to 480 (NDVKTANLIFSKSVKSQFQSPDDLATLYIEWCELFVK), 500 to 531 (GKFDYNDSSIDIHIRVQKSIKLWSFYLDLLES), 574 to 609 (NFYERSFSAYEMGLKIFKDSKIKFEIWNIYLSKIIK), 612 to 653 (LNIE…QYEQ), 708 to 744 (NDHNETRKIYEQSLKDNQLTLPNLIQLTMEFINFETE), and 746 to 782 (MEFNRVRSLFKYVCQLSNPQSPLIEPIWHNWETFELN).

It belongs to the crooked-neck family. As to quaternary structure, associated with the spliceosome.

The protein resides in the nucleus. Involved in pre-mRNA splicing and cell cycle progression. The sequence is that of Pre-mRNA-splicing factor SYF1 (SYF1) from Debaryomyces hansenii (strain ATCC 36239 / CBS 767 / BCRC 21394 / JCM 1990 / NBRC 0083 / IGC 2968) (Yeast).